Consider the following 628-residue polypeptide: tRNA 5-methylaminomethyl-2-thiouridine biosynthesis bifunctional protein MnmC (628 aa).

The tract at residues 1–237 (MSSYSPLVPP…KWHMTVGVRE (237 aa)) is tRNA (mnm(5)s(2)U34)-methyltransferase. Residues 265–628 (VGGGLAGAGI…ADLLAAVAPR (364 aa)) are FAD-dependent cmnm(5)s(2)U34 oxidoreductase.

This sequence in the N-terminal section; belongs to the methyltransferase superfamily. tRNA (mnm(5)s(2)U34)-methyltransferase family. The protein in the C-terminal section; belongs to the DAO family. The cofactor is FAD.

The protein localises to the cytoplasm. It catalyses the reaction 5-aminomethyl-2-thiouridine(34) in tRNA + S-adenosyl-L-methionine = 5-methylaminomethyl-2-thiouridine(34) in tRNA + S-adenosyl-L-homocysteine + H(+). In terms of biological role, catalyzes the last two steps in the biosynthesis of 5-methylaminomethyl-2-thiouridine (mnm(5)s(2)U) at the wobble position (U34) in tRNA. Catalyzes the FAD-dependent demodification of cmnm(5)s(2)U34 to nm(5)s(2)U34, followed by the transfer of a methyl group from S-adenosyl-L-methionine to nm(5)s(2)U34, to form mnm(5)s(2)U34. This chain is tRNA 5-methylaminomethyl-2-thiouridine biosynthesis bifunctional protein MnmC, found in Bordetella petrii (strain ATCC BAA-461 / DSM 12804 / CCUG 43448).